The following is a 500-amino-acid chain: Taxoid 7-beta-hydroxylase (500 aa).

The chain crosses the membrane as a helical span at residues 24–44 (PAILSTALTAIAGIIVLLVIT). Cysteine 446 is a heme binding site.

Belongs to the cytochrome P450 family.

It is found in the microsome membrane. It catalyses the reaction taxusin + reduced [NADPH--hemoprotein reductase] + O2 = 7beta-hydroxytaxusin + oxidized [NADPH--hemoprotein reductase] + H2O + H(+). The enzyme catalyses 2alpha-hydroxytaxusin + reduced [NADPH--hemoprotein reductase] + O2 = 2alpha,7beta-dihydroxytaxusin + oxidized [NADPH--hemoprotein reductase] + H2O + H(+). The catalysed reaction is 7beta-hydroxytaxusin + reduced [NADPH--hemoprotein reductase] + O2 = 2alpha,7beta-dihydroxytaxusin + oxidized [NADPH--hemoprotein reductase] + H2O + H(+). The protein operates within alkaloid biosynthesis; taxol biosynthesis. Its function is as follows. Catalyzes the conversion of taxusin to 7-beta-hydroxytaxusin in taxol biosynthesis. Catalyzes the conversion of 2-alpha-hydroxytaxusin to 2-alpha-7-beta-hydroxytaxusin in taxol biosynthesis. The protein is Taxoid 7-beta-hydroxylase of Taxus cuspidata (Japanese yew).